Here is a 293-residue protein sequence, read N- to C-terminus: tRNA-cytidine(32) 2-sulfurtransferase (293 aa).

The PP-loop motif motif lies at Ser-71 to Ser-76. Positions 146, 149, and 237 each coordinate [4Fe-4S] cluster.

Belongs to the TtcA family. As to quaternary structure, homodimer. Mg(2+) is required as a cofactor. Requires [4Fe-4S] cluster as cofactor.

The protein resides in the cytoplasm. It carries out the reaction cytidine(32) in tRNA + S-sulfanyl-L-cysteinyl-[cysteine desulfurase] + AH2 + ATP = 2-thiocytidine(32) in tRNA + L-cysteinyl-[cysteine desulfurase] + A + AMP + diphosphate + H(+). It functions in the pathway tRNA modification. Its function is as follows. Catalyzes the ATP-dependent 2-thiolation of cytidine in position 32 of tRNA, to form 2-thiocytidine (s(2)C32). The sulfur atoms are provided by the cysteine/cysteine desulfurase (IscS) system. In Sinorhizobium medicae (strain WSM419) (Ensifer medicae), this protein is tRNA-cytidine(32) 2-sulfurtransferase.